A 232-amino-acid polypeptide reads, in one-letter code: MQKNAAHTYAISSLLVLSLTGCAWIPSTPLVQGATSAQPVPGPTPVANGSIFQSAQPINYGYQPLFEDRRPRNIGDTLTIVLQENVSASKSSSANASRDGKTNFGFDTVPRYLQGLFGNARADVEASGGNTFNGKGGANASNTFSGTLTVTVDQVLVNGNLHVVGEKQIAINQGTEFIRFSGVVNPRTISGSNTVPSTQVADARIEYVGNGYINEAQNMGWLQRFFLNLSPM.

Positions 1–21 (MQKNAAHTYAISSLLVLSLTG) are cleaved as a signal peptide. Residue cysteine 22 is the site of N-palmitoyl cysteine attachment. A lipid anchor (S-diacylglycerol cysteine) is attached at cysteine 22.

This sequence belongs to the FlgH family. The basal body constitutes a major portion of the flagellar organelle and consists of four rings (L,P,S, and M) mounted on a central rod.

The protein resides in the cell outer membrane. It localises to the bacterial flagellum basal body. Its function is as follows. Assembles around the rod to form the L-ring and probably protects the motor/basal body from shearing forces during rotation. This Shigella flexneri protein is Flagellar L-ring protein (flgH).